A 509-amino-acid chain; its full sequence is FAD-linked oxidoreductase dpmaF (509 aa).

The signal sequence occupies residues 1 to 21 (MTRLSLQLIAGLAGQAWLVNS). The FAD-binding PCMH-type domain occupies 59 to 231 (LQYEPIAVAV…AEYGFETFPA (173 aa)). Residues Asn125, Asn193, and Asn281 are each glycosylated (N-linked (GlcNAc...) asparagine).

Belongs to the oxygen-dependent FAD-linked oxidoreductase family. The cofactor is FAD.

Its pathway is secondary metabolite biosynthesis; terpenoid biosynthesis. Functionally, FAD-linked oxidoreductase; part of the gene cluster that mediates the biosynthesis of the diterpenoid pyrones subglutinols A and B. The first step of the pathway is the synthesis of the alpha-pyrone moiety by the polyketide synthase dpmaA via condensation of one acetyl-CoA starter unit with 3 malonyl-CoA units and 2 methylations. The alpha-pyrone is then combined with geranylgeranyl pyrophosphate (GGPP) formed by the GGPP synthase dpmaD through the action of the prenyltransferase dpmaC to yield a linear alpha-pyrone diterpenoid. Subsequent steps in the diterpenoid pyrone biosynthetic pathway involve the decalin core formation, which is initiated by the epoxidation of the C10-C11 olefin by the FAD-dependent oxidoreductase dpmaE, and is followed by a cyclization cascade catalyzed by the terpene cyclase dpmaB. The dehydrogenase dpmaF is then involved in tetrahydrofuran (THF) ring formation at the C5 unit to complete the formation of subglutinols A and B. The polypeptide is FAD-linked oxidoreductase dpmaF (Metarhizium anisopliae (Entomophthora anisopliae)).